The chain runs to 307 residues: Aspartate carbamoyltransferase catalytic subunit (307 aa).

The carbamoyl phosphate site is built by Arg56 and Thr57. Lys84 contacts L-aspartate. Carbamoyl phosphate contacts are provided by Arg106, His136, and Gln139. Residues Arg169 and Arg221 each contribute to the L-aspartate site. 2 residues coordinate carbamoyl phosphate: Ala262 and Pro263.

Belongs to the aspartate/ornithine carbamoyltransferase superfamily. ATCase family. Heterododecamer (2C3:3R2) of six catalytic PyrB chains organized as two trimers (C3), and six regulatory PyrI chains organized as three dimers (R2).

The catalysed reaction is carbamoyl phosphate + L-aspartate = N-carbamoyl-L-aspartate + phosphate + H(+). It functions in the pathway pyrimidine metabolism; UMP biosynthesis via de novo pathway; (S)-dihydroorotate from bicarbonate: step 2/3. Its function is as follows. Catalyzes the condensation of carbamoyl phosphate and aspartate to form carbamoyl aspartate and inorganic phosphate, the committed step in the de novo pyrimidine nucleotide biosynthesis pathway. The sequence is that of Aspartate carbamoyltransferase catalytic subunit from Streptococcus pneumoniae (strain JJA).